The primary structure comprises 404 residues: Cysteine desulfurase IscS (404 aa).

Residues 75–76 (AT), Asn155, Gln183, and 203–205 (SGH) contribute to the pyridoxal 5'-phosphate site. Lys206 carries the post-translational modification N6-(pyridoxal phosphate)lysine. Thr243 contacts pyridoxal 5'-phosphate. The active-site Cysteine persulfide intermediate is Cys328. Cys328 provides a ligand contact to [2Fe-2S] cluster.

It belongs to the class-V pyridoxal-phosphate-dependent aminotransferase family. NifS/IscS subfamily. As to quaternary structure, homodimer. Forms a heterotetramer with IscU, interacts with other sulfur acceptors. Pyridoxal 5'-phosphate serves as cofactor.

It localises to the cytoplasm. It catalyses the reaction (sulfur carrier)-H + L-cysteine = (sulfur carrier)-SH + L-alanine. Its pathway is cofactor biosynthesis; iron-sulfur cluster biosynthesis. Functionally, master enzyme that delivers sulfur to a number of partners involved in Fe-S cluster assembly, tRNA modification or cofactor biosynthesis. Catalyzes the removal of elemental sulfur atoms from cysteine to produce alanine. Functions as a sulfur delivery protein for Fe-S cluster synthesis onto IscU, an Fe-S scaffold assembly protein, as well as other S acceptor proteins. The sequence is that of Cysteine desulfurase IscS from Actinobacillus succinogenes (strain ATCC 55618 / DSM 22257 / CCUG 43843 / 130Z).